Consider the following 417-residue polypeptide: XO lethal protein 1 (417 aa).

A disordered region spans residues 373 to 417 (VSPGETSSEGISDEHHYEEYDEDDIMEEEEAPSARQDDTYDEDEE). Acidic residues predominate over residues 391–403 (EYDEDDIMEEEEA).

This sequence belongs to the GHMP kinase family. Xol-1 subfamily.

The protein resides in the nucleus. Its function is as follows. Sex-determining factor that is required for sexual differentiation and X chromosome dosage compensation to promote male development. High expression during gastrulation triggers male development, while low expression at that time triggers hermaphrodite development. Although related to GHMP kinase, its mode of action remains unclear. This chain is XO lethal protein 1, found in Caenorhabditis elegans.